The sequence spans 184 residues: Large ribosomal subunit protein uL5 (184 aa).

The protein belongs to the universal ribosomal protein uL5 family. In terms of assembly, part of the 50S ribosomal subunit; part of the 5S rRNA/L5/L18/L25 subcomplex. Contacts the 5S rRNA and the P site tRNA. Forms a bridge to the 30S subunit in the 70S ribosome.

Its function is as follows. This is one of the proteins that bind and probably mediate the attachment of the 5S RNA into the large ribosomal subunit, where it forms part of the central protuberance. In the 70S ribosome it contacts protein S13 of the 30S subunit (bridge B1b), connecting the 2 subunits; this bridge is implicated in subunit movement. Contacts the P site tRNA; the 5S rRNA and some of its associated proteins might help stabilize positioning of ribosome-bound tRNAs. This Ureaplasma parvum serovar 3 (strain ATCC 27815 / 27 / NCTC 11736) protein is Large ribosomal subunit protein uL5.